The primary structure comprises 131 residues: Probable histone H2A.3 (131 aa).

The interval 1-23 (MAGRGKQLGSGAAKKSTSRSSKA) is disordered. Over residues 9–23 (GSGAAKKSTSRSSKA) the composition is skewed to low complexity.

The protein belongs to the histone H2A family. The nucleosome is a histone octamer containing two molecules each of H2A, H2B, H3 and H4 assembled in one H3-H4 heterotetramer and two H2A-H2B heterodimers. The octamer wraps approximately 147 bp of DNA. In terms of processing, not ubiquitinated. Expressed in meristems and dividing cells.

The protein localises to the nucleus. The protein resides in the chromosome. Core component of nucleosome. Nucleosomes wrap and compact DNA into chromatin, limiting DNA accessibility to the cellular machineries which require DNA as a template. Histones thereby play a central role in transcription regulation, DNA repair, DNA replication and chromosomal stability. DNA accessibility is regulated via a complex set of post-translational modifications of histones, also called histone code, and nucleosome remodeling. This Arabidopsis thaliana (Mouse-ear cress) protein is Probable histone H2A.3.